The following is a 506-amino-acid chain: Sodium-coupled neutral amino acid symporter 2 (506 aa).

A disordered region spans residues 1-23; the sequence is MKKAEMGRFNISPDEDSSSYSSN. Residues 1 to 76 lie on the Cytoplasmic side of the membrane; the sequence is MKKAEMGRFN…HPGTTSFGMS (76 aa). Residues 1–96 are regulates protein turnover upon amino acid deprivation; it reads MKKAEMGRFN…SGILGLSYAM (96 aa). A phosphoserine mark is found at Ser-12, Ser-21, Ser-22, and Ser-55. Residues 77–96 form a helical membrane-spanning segment; the sequence is VFNLSNAIVGSGILGLSYAM. Asn-82 is a binding site for Na(+). Topologically, residues 97–102 are extracellular; that stretch reads ANTGIA. A helical membrane pass occupies residues 103-123; it reads LFIILLTFVSIFSLYSVHLLL. The Cytoplasmic portion of the chain corresponds to 124–158; that stretch reads KTANEGGSLLYEQLGYKAFGLVGKLAASGSITMQN. A helical membrane pass occupies residues 159–177; sequence IGAMSSYLFIVKYELPLVI. The Extracellular portion of the chain corresponds to 178-188; it reads QALTNIEDKTG. Residues 189 to 209 form a helical membrane-spanning segment; the sequence is LWYLNGNYLVLLVSLVVILPL. Residues 210–217 are Cytoplasmic-facing; sequence SLFRNLGY. Residues 218–238 traverse the membrane as a helical segment; it reads LGYTSGLSLLCMVFFLIVVIC. The Extracellular segment spans residues 239 to 292; it reads KKFQVPCPVEAALIINETINTTLTQPTALVPALSHNVTENDSCRPHYFIFNSQT. Cysteines 245 and 281 form a disulfide. N-linked (GlcNAc...) asparagine glycans are attached at residues Asn-258 and Asn-274. The chain crosses the membrane as a helical span at residues 293 to 313; sequence VYAVPILIFSFVCHPAVLPIY. Residues 314 to 329 are Cytoplasmic-facing; it reads EELKDRSRRRMMNVSK. A helical transmembrane segment spans residues 330–350; that stretch reads ISFFAMFLMYLLAALFGYLTF. Topologically, residues 351-371 are extracellular; sequence YEHVESELLHTYSSILGTDIL. The chain crosses the membrane as a helical span at residues 372 to 392; the sequence is LLIVRLAVLMAVTLTVPVVIF. Residue Thr-386 participates in Na(+) binding. At 393-413 the chain is on the cytoplasmic side; that stretch reads PIRSSVTHLLCASKDFSWWRH. The chain crosses the membrane as a helical span at residues 414–434; it reads SLITVSILAFTNLLVIFVPTI. Residues 435-436 lie on the Extracellular side of the membrane; sequence RD. A helical membrane pass occupies residues 437 to 457; it reads IFGFIGASAASMLIFILPSAF. The Cytoplasmic portion of the chain corresponds to 458-472; that stretch reads YIKLVKKEPMKSVQK. The helical transmembrane segment at 473–495 threads the bilayer; the sequence is IGALFFLLSGVLVMTGSMALIVL. The Extracellular portion of the chain corresponds to 496–506; it reads DWVHNAPGGGH.

Belongs to the amino acid/polyamine transporter 2 family. In terms of processing, polyubiquitination by NEDD4L regulates the degradation and the activity of SLC38A2.

It is found in the cell membrane. It catalyses the reaction L-alanine(in) + Na(+)(in) = L-alanine(out) + Na(+)(out). The enzyme catalyses glycine(in) + Na(+)(in) = glycine(out) + Na(+)(out). It carries out the reaction L-serine(in) + Na(+)(in) = L-serine(out) + Na(+)(out). The catalysed reaction is L-proline(in) + Na(+)(in) = L-proline(out) + Na(+)(out). It catalyses the reaction L-methionine(in) + Na(+)(in) = L-methionine(out) + Na(+)(out). The enzyme catalyses L-histidine(in) + Na(+)(in) = L-histidine(out) + Na(+)(out). It carries out the reaction L-asparagine(in) + Na(+)(in) = L-asparagine(out) + Na(+)(out). The catalysed reaction is L-glutamine(in) + Na(+)(in) = L-glutamine(out) + Na(+)(out). It catalyses the reaction L-threonine(in) + Na(+)(in) = L-threonine(out) + Na(+)(out). The enzyme catalyses L-leucine(in) + Na(+)(in) = L-leucine(out) + Na(+)(out). It carries out the reaction L-phenylalanine(in) + Na(+)(in) = L-phenylalanine(out) + Na(+)(out). Inhibited by N-methyl-D-glucamine. Inhibited by choline. Allosteric regulation of sodium ions binding by pH. Its function is as follows. Symporter that cotransports neutral amino acids and sodium ions from the extracellular to the intracellular side of the cell membrane. The transport is pH-sensitive, Li(+)-intolerant, electrogenic, driven by the Na(+) electrochemical gradient and cotransports of neutral amino acids and sodium ions with a stoichiometry of 1:1. May function in the transport of amino acids at the blood-brain barrier. May function in the transport of amino acids in the supply of maternal nutrients to the fetus through the placenta. Maintains a key metabolic glutamine/glutamate balance underpinning retrograde signaling by dendritic release of the neurotransmitter glutamate. Transports L-proline in differentiating osteoblasts for the efficient synthesis of proline-enriched proteins and provides proline essential for osteoblast differentiation and bone formation during bone development. This chain is Sodium-coupled neutral amino acid symporter 2, found in Pan paniscus (Pygmy chimpanzee).